A 173-amino-acid polypeptide reads, in one-letter code: uncharacterized protein (173 aa).

An N-terminal signal peptide occupies residues 1–25; it reads MPVVTAVGRRRGFAMPWVSTARSGA.

This is an uncharacterized protein from Mycobacterium bovis (strain ATCC BAA-935 / AF2122/97).